Consider the following 442-residue polypeptide: Armadillo-like helical domain containing protein 1 (442 aa).

This is Armadillo-like helical domain containing protein 1 from Bos taurus (Bovine).